Reading from the N-terminus, the 374-residue chain is uncharacterized protein (374 aa).

The chain crosses the membrane as a helical span at residues 27–49 (AISPILALLIVLGVTIVVGAVFY).

Its subcellular location is the membrane. This is an uncharacterized protein from Methanocaldococcus jannaschii (strain ATCC 43067 / DSM 2661 / JAL-1 / JCM 10045 / NBRC 100440) (Methanococcus jannaschii).